A 385-amino-acid polypeptide reads, in one-letter code: Probable tRNA sulfurtransferase (385 aa).

The region spanning 57–160 (DGVIERVKKV…RGNAYVFTDK (104 aa)) is the THUMP domain. ATP contacts are provided by residues 180–181 (ML), 205–206 (YY), Arg262, Gly284, and Gln293.

It belongs to the ThiI family.

Its subcellular location is the cytoplasm. The enzyme catalyses [ThiI sulfur-carrier protein]-S-sulfanyl-L-cysteine + a uridine in tRNA + 2 reduced [2Fe-2S]-[ferredoxin] + ATP + H(+) = [ThiI sulfur-carrier protein]-L-cysteine + a 4-thiouridine in tRNA + 2 oxidized [2Fe-2S]-[ferredoxin] + AMP + diphosphate. The catalysed reaction is [ThiS sulfur-carrier protein]-C-terminal Gly-Gly-AMP + S-sulfanyl-L-cysteinyl-[cysteine desulfurase] + AH2 = [ThiS sulfur-carrier protein]-C-terminal-Gly-aminoethanethioate + L-cysteinyl-[cysteine desulfurase] + A + AMP + 2 H(+). It participates in cofactor biosynthesis; thiamine diphosphate biosynthesis. In terms of biological role, catalyzes the ATP-dependent transfer of a sulfur to tRNA to produce 4-thiouridine in position 8 of tRNAs, which functions as a near-UV photosensor. Also catalyzes the transfer of sulfur to the sulfur carrier protein ThiS, forming ThiS-thiocarboxylate. This is a step in the synthesis of thiazole, in the thiamine biosynthesis pathway. The sulfur is donated as persulfide by IscS. This Clostridium perfringens (strain SM101 / Type A) protein is Probable tRNA sulfurtransferase.